The chain runs to 492 residues: Bifunctional purine biosynthesis protein PurH (492 aa).

In terms of domain architecture, MGS-like spans 1–144 (MKKAILSVSN…KNFKHVTTIV (144 aa)).

This sequence belongs to the PurH family.

The enzyme catalyses (6R)-10-formyltetrahydrofolate + 5-amino-1-(5-phospho-beta-D-ribosyl)imidazole-4-carboxamide = 5-formamido-1-(5-phospho-D-ribosyl)imidazole-4-carboxamide + (6S)-5,6,7,8-tetrahydrofolate. It carries out the reaction IMP + H2O = 5-formamido-1-(5-phospho-D-ribosyl)imidazole-4-carboxamide. Its pathway is purine metabolism; IMP biosynthesis via de novo pathway; 5-formamido-1-(5-phospho-D-ribosyl)imidazole-4-carboxamide from 5-amino-1-(5-phospho-D-ribosyl)imidazole-4-carboxamide (10-formyl THF route): step 1/1. The protein operates within purine metabolism; IMP biosynthesis via de novo pathway; IMP from 5-formamido-1-(5-phospho-D-ribosyl)imidazole-4-carboxamide: step 1/1. The protein is Bifunctional purine biosynthesis protein PurH of Staphylococcus haemolyticus (strain JCSC1435).